The chain runs to 110 residues: UPF0145 protein LMOf2365_0219 (110 aa).

This sequence belongs to the UPF0145 family.

This Listeria monocytogenes serotype 4b (strain F2365) protein is UPF0145 protein LMOf2365_0219.